We begin with the raw amino-acid sequence, 206 residues long: dITP/XTP pyrophosphatase (206 aa).

7–12 (SNNAKK) contributes to the substrate binding site. Asp-72 functions as the Proton acceptor in the catalytic mechanism. Asp-72 is a Mg(2+) binding site. Residues Ser-73, 155 to 158 (FGYD), Lys-182, and 187 to 188 (HR) each bind substrate.

It belongs to the HAM1 NTPase family. In terms of assembly, homodimer. Mg(2+) serves as cofactor.

It catalyses the reaction XTP + H2O = XMP + diphosphate + H(+). The enzyme catalyses dITP + H2O = dIMP + diphosphate + H(+). It carries out the reaction ITP + H2O = IMP + diphosphate + H(+). Functionally, pyrophosphatase that catalyzes the hydrolysis of nucleoside triphosphates to their monophosphate derivatives, with a high preference for the non-canonical purine nucleotides XTP (xanthosine triphosphate), dITP (deoxyinosine triphosphate) and ITP. Seems to function as a house-cleaning enzyme that removes non-canonical purine nucleotides from the nucleotide pool, thus preventing their incorporation into DNA/RNA and avoiding chromosomal lesions. The protein is dITP/XTP pyrophosphatase of Corynebacterium glutamicum (strain R).